A 542-amino-acid chain; its full sequence is Esterase S (542 aa).

An N-terminal signal peptide occupies residues 1–22 (MTQILLPIALLCLFAASTLSNP). A disulfide bridge links Cys81 with Cys100. The N-linked (GlcNAc...) asparagine glycan is linked to Asn110. Ser204 acts as the Acyl-ester intermediate in catalysis. Cys256 and Cys268 form a disulfide bridge. Asn396 carries N-linked (GlcNAc...) asparagine glycosylation. A disulfide bridge links Cys507 with Cys528.

The protein belongs to the type-B carboxylesterase/lipase family. As to quaternary structure, monomer. Specifically expressed in the ejaculatory bulbs of male.

It localises to the secreted. It carries out the reaction a carboxylic ester + H2O = an alcohol + a carboxylate + H(+). Transferred from the ejaculatory bulbs of males to the female genitals upon copulation, plays an important role in the reproductive biology. This is Esterase S (EstS) from Drosophila virilis (Fruit fly).